A 427-amino-acid chain; its full sequence is Light-independent protochlorophyllide reductase subunit N (427 aa).

Cys-28, Cys-53, and Cys-114 together coordinate [4Fe-4S] cluster.

Belongs to the BchN/ChlN family. As to quaternary structure, protochlorophyllide reductase is composed of three subunits; BchL, BchN and BchB. Forms a heterotetramer of two BchB and two BchN subunits. [4Fe-4S] cluster serves as cofactor.

The enzyme catalyses chlorophyllide a + oxidized 2[4Fe-4S]-[ferredoxin] + 2 ADP + 2 phosphate = protochlorophyllide a + reduced 2[4Fe-4S]-[ferredoxin] + 2 ATP + 2 H2O. It participates in porphyrin-containing compound metabolism; bacteriochlorophyll biosynthesis (light-independent). Component of the dark-operative protochlorophyllide reductase (DPOR) that uses Mg-ATP and reduced ferredoxin to reduce ring D of protochlorophyllide (Pchlide) to form chlorophyllide a (Chlide). This reaction is light-independent. The NB-protein (BchN-BchB) is the catalytic component of the complex. In Dinoroseobacter shibae (strain DSM 16493 / NCIMB 14021 / DFL 12), this protein is Light-independent protochlorophyllide reductase subunit N.